The following is a 252-amino-acid chain: Ubiquinone biosynthesis O-methyltransferase (252 aa).

4 residues coordinate S-adenosyl-L-methionine: Arg41, Gly72, Asp93, and Met136.

The protein belongs to the methyltransferase superfamily. UbiG/COQ3 family.

It catalyses the reaction a 3-demethylubiquinol + S-adenosyl-L-methionine = a ubiquinol + S-adenosyl-L-homocysteine + H(+). The enzyme catalyses a 3-(all-trans-polyprenyl)benzene-1,2-diol + S-adenosyl-L-methionine = a 2-methoxy-6-(all-trans-polyprenyl)phenol + S-adenosyl-L-homocysteine + H(+). It functions in the pathway cofactor biosynthesis; ubiquinone biosynthesis. Its function is as follows. O-methyltransferase that catalyzes the 2 O-methylation steps in the ubiquinone biosynthetic pathway. The polypeptide is Ubiquinone biosynthesis O-methyltransferase (Rhizobium leguminosarum bv. trifolii (strain WSM2304)).